Consider the following 311-residue polypeptide: Urease accessory protein UreD 2 (311 aa).

The protein belongs to the UreD family. In terms of assembly, ureD, UreF and UreG form a complex that acts as a GTP-hydrolysis-dependent molecular chaperone, activating the urease apoprotein by helping to assemble the nickel containing metallocenter of UreC. The UreE protein probably delivers the nickel.

Its subcellular location is the cytoplasm. In terms of biological role, required for maturation of urease via the functional incorporation of the urease nickel metallocenter. The sequence is that of Urease accessory protein UreD 2 from Methylorubrum extorquens (strain PA1) (Methylobacterium extorquens).